A 365-amino-acid chain; its full sequence is Probable galacturonosyltransferase-like 10 (365 aa).

The Cytoplasmic portion of the chain corresponds to 1 to 10; it reads MMSGSRLASR. Residues 11 to 31 traverse the membrane as a helical; Signal-anchor for type II membrane protein segment; that stretch reads LIIIFSIISTSFFTVESIRLF. Over 32–365 the chain is Lumenal; sequence PDSFDDASSD…LQYNQELEIL (334 aa). An N-linked (GlcNAc...) asparagine glycan is attached at N209.

This sequence belongs to the glycosyltransferase 8 family.

The protein localises to the golgi apparatus membrane. Its pathway is glycan metabolism; pectin biosynthesis. In terms of biological role, may be involved in pectin and/or xylans biosynthesis in cell walls. This chain is Probable galacturonosyltransferase-like 10 (GATL10), found in Arabidopsis thaliana (Mouse-ear cress).